We begin with the raw amino-acid sequence, 957 residues long: MSAGFVQRHLGPSPAEQAQMLQRLGCRDLEQLLQECVPAEILIDADQARDALPQECDERQALRELEQRAAANTVLRNLIGLGYYDTATPALIQRHVLENPAWYTAYTPYQAEIAQGRLEALLNFQTLISELTGLPIANASLLDEATAAAEAMTLAYGACRLKQARRFHVQADLFPQTLAVLQTRAEPLGIELVVADPAAMDFGDDSFGLLLQLPTASGACPDPTEVIARAKAADVLVIAAVDPLAQVLMPPVAQLGVQIAVGSAQRFGVPLGFGGPHAAFFATTEAYKRQIPGRLVGMSRDAAGEPALRLALQTREQHIRRDKATSNICTAQVLLAVMAGFYAVHHGPDGLTAIARRVQRLTAALAAGLQQLGLDVAAAPAFDTLRLRLDQPNGWIERLEAAGFNLLPLPDGAGISLDECSDEAEVQALLECFAAGCGRTAPAISELLAATPQAKSVGELPVRPAGWLPQAVFQLYRSETELLRYIQRLVSKDFSLVHGMIPLGSCTMKLNAAAELQPVSWAAFNRLHPFVPAAQRQGYDQLINELEAWLATITGFAAVSLQPNAGSQGEYAGLLVIRAWHRQRGEGHRNICLIPTSAHGTNPASAVMAGMQVVAVQCDEAGNIDQADLAAKAEQHADQLAALMVTYPSTHGVFEQGISDICALIHRHGGQVYLDGANLNAQVGVCQPGRFGADVCHLNLHKTFCIPHGGGGPGVGPIAVAAHLAPFLPGHPLVPCGGEQAIGPVSAAPWGSASILPISWMYIRLMGGAGLRQATAVALLAANDLAERLEPHFPVLYRGANGRVAHECILDLRPLKRSAGLEVDDLAKRLMDYGFHAPTVSWPVAGTVMVEPTESESLLELDRFVEAMMAIRAEAAAIEAGLCDRDDNPLRRAPHTLAAVTADVWERPYSREQAAYPVQGLRSNKLWPAVSRIDNAFGDRNLICTCPSVEELARAAG.

Lysine 702 is modified (N6-(pyridoxal phosphate)lysine).

Belongs to the GcvP family. In terms of assembly, the glycine cleavage system is composed of four proteins: P, T, L and H. It depends on pyridoxal 5'-phosphate as a cofactor.

It carries out the reaction N(6)-[(R)-lipoyl]-L-lysyl-[glycine-cleavage complex H protein] + glycine + H(+) = N(6)-[(R)-S(8)-aminomethyldihydrolipoyl]-L-lysyl-[glycine-cleavage complex H protein] + CO2. Functionally, the glycine cleavage system catalyzes the degradation of glycine. The P protein binds the alpha-amino group of glycine through its pyridoxal phosphate cofactor; CO(2) is released and the remaining methylamine moiety is then transferred to the lipoamide cofactor of the H protein. The chain is Glycine dehydrogenase (decarboxylating) from Synechococcus sp. (strain RCC307).